Consider the following 340-residue polypeptide: NAD-dependent epimerase/dehydratase terH (340 aa).

Residues 7–27 traverse the membrane as a helical segment; it reads IVPPGGLVLVTGVTGFIGSYI. Asn-139 is a glycosylation site (N-linked (GlcNAc...) asparagine). Tyr-176 is a binding site for NADP(+).

The protein belongs to the NAD(P)-dependent epimerase/dehydratase family. Dihydroflavonol-4-reductase subfamily.

Its subcellular location is the membrane. In terms of biological role, NAD-dependent epimerase/dehydratase; part of the gene cluster that mediates the biosynthesis of terrein, a fungal metabolite with ecological, antimicrobial, antiproliferative, and antioxidative activities. The first step in the pathway is performed by the polyketide synthase terA that produces 4-hydroxy-6-methylpyranon (4-HMP), orsellinic acid (OA), and 2,3-dehydro-6-hydroxymellein (2,3-dehydro-6-HM) by condensing acetyl-CoA with two, three, or four malonyl-CoA units, respectively. 4-HMP and OA are not pathway intermediates, but are rather shunt or side products. 2,3-dehydro-6-HM is further converted to 6-hydroxymellein (6-HM) by the 6-hydroxymellein synthase terB. The monooxygenases terC and terD, the multicopper oxidase terE and the Kelch-like protein terF are then involved in the transformation of 6-HM to terrein. Even if they are co-regulated with the other terrein cluster genes, terH and terI seem to be dispensable for terrein production; whereas one or both of the 2 transporters terG and terJ are probably required for efficient secretion of metabolites. The polypeptide is NAD-dependent epimerase/dehydratase terH (Aspergillus terreus (strain NIH 2624 / FGSC A1156)).